Consider the following 130-residue polypeptide: Small ribosomal subunit protein uS8 (130 aa).

Belongs to the universal ribosomal protein uS8 family. As to quaternary structure, part of the 30S ribosomal subunit. Contacts proteins S5 and S12.

In terms of biological role, one of the primary rRNA binding proteins, it binds directly to 16S rRNA central domain where it helps coordinate assembly of the platform of the 30S subunit. This chain is Small ribosomal subunit protein uS8, found in Proteus mirabilis (strain HI4320).